Reading from the N-terminus, the 171-residue chain is 3-hydroxydecanoyl-[acyl-carrier-protein] dehydratase (171 aa).

The active site involves histidine 70.

The protein belongs to the thioester dehydratase family. FabA subfamily. In terms of assembly, homodimer.

Its subcellular location is the cytoplasm. The enzyme catalyses a (3R)-hydroxyacyl-[ACP] = a (2E)-enoyl-[ACP] + H2O. The catalysed reaction is (3R)-hydroxydecanoyl-[ACP] = (2E)-decenoyl-[ACP] + H2O. It carries out the reaction (2E)-decenoyl-[ACP] = (3Z)-decenoyl-[ACP]. The protein operates within lipid metabolism; fatty acid biosynthesis. In terms of biological role, necessary for the introduction of cis unsaturation into fatty acids. Catalyzes the dehydration of (3R)-3-hydroxydecanoyl-ACP to E-(2)-decenoyl-ACP and then its isomerization to Z-(3)-decenoyl-ACP. Can catalyze the dehydratase reaction for beta-hydroxyacyl-ACPs with saturated chain lengths up to 16:0, being most active on intermediate chain length. This chain is 3-hydroxydecanoyl-[acyl-carrier-protein] dehydratase, found in Histophilus somni (strain 129Pt) (Haemophilus somnus).